Consider the following 661-residue polypeptide: Heme transporter BhuA (661 aa).

The signal sequence occupies residues M1–A23. Positions K48–V159 constitute a TBDR plug domain. The TBDR beta-barrel domain maps to T170–F661.

It belongs to the TonB-dependent receptor family.

Its subcellular location is the cell outer membrane. Heme transporter playing an important role in stationary-phase iron acquisition and required for maintenance of chronic infection in mice. The polypeptide is Heme transporter BhuA (bhuA) (Brucella abortus (strain 2308)).